We begin with the raw amino-acid sequence, 159 residues long: Ribosomal RNA large subunit methyltransferase H (159 aa).

S-adenosyl-L-methionine contacts are provided by residues leucine 76, glycine 108, and 127–132 (FSKMTF).

This sequence belongs to the RNA methyltransferase RlmH family. In terms of assembly, homodimer.

It localises to the cytoplasm. It carries out the reaction pseudouridine(1915) in 23S rRNA + S-adenosyl-L-methionine = N(3)-methylpseudouridine(1915) in 23S rRNA + S-adenosyl-L-homocysteine + H(+). In terms of biological role, specifically methylates the pseudouridine at position 1915 (m3Psi1915) in 23S rRNA. In Geobacillus kaustophilus (strain HTA426), this protein is Ribosomal RNA large subunit methyltransferase H.